We begin with the raw amino-acid sequence, 119 residues long: Large ribosomal subunit protein bL20 (119 aa).

It belongs to the bacterial ribosomal protein bL20 family.

In terms of biological role, binds directly to 23S ribosomal RNA and is necessary for the in vitro assembly process of the 50S ribosomal subunit. It is not involved in the protein synthesizing functions of that subunit. This Shewanella woodyi (strain ATCC 51908 / MS32) protein is Large ribosomal subunit protein bL20.